Consider the following 567-residue polypeptide: PHD finger protein 1 (567 aa).

Residues 1–31 (MAQPPRLSRSGASSLWDPASPAPTSGPRPRL) form a disordered region. The Tudor domain maps to 29–86 (PRLWEGQDVLARWTDGLLYLGTIKKVDSAREVCLVQFEDDSQFLVLWKDISPAALPGE). 2 PHD-type zinc fingers span residues 87–142 (ELLC…CVFA) and 186–240 (QSYC…CRGG). Disordered regions lie at residues 333–441 (ARMP…TDAR) and 455–537 (HPSA…GYLS). At Gly-360 the chain carries Phosphoserine. A compositionally biased stretch (basic and acidic residues) spans 371–386 (PEPEPLRRRQKGKVEE). Ser-420 carries the post-translational modification Phosphoserine. Low complexity-rich tracts occupy residues 423-433 (PNQSYQGSSGY), 456-470 (PSAS…SGPP), and 488-510 (SAPH…LPRR). The segment covering 524-534 (GTGGGVRGGVG) has biased composition (gly residues).

The protein belongs to the Polycomblike family. Interacts with CHMP1. Associated component of the PRC2 complex. Interacts with p53/TP53. Highest levels in heart, skeletal muscle, and pancreas, lower levels in brain, placenta, lung, liver and kidney.

It localises to the nucleus. Its subcellular location is the cytoplasm. It is found in the cytoskeleton. The protein localises to the microtubule organizing center. The protein resides in the centrosome. Functionally, polycomb group (PcG) that specifically binds histone H3 trimethylated at 'Lys-36' (H3K36me3) and recruits the PRC2 complex. Involved in DNA damage response and is recruited at double-strand breaks (DSBs). Acts by binding to H3K36me3, a mark for transcriptional activation, and recruiting the PRC2 complex: it is however unclear whether recruitment of the PRC2 complex to H3K36me3 leads to enhance or inhibit H3K27me3 methylation mediated by the PRC2 complex. According to some reports, PRC2 recruitment by PHF1 promotes H3K27me3 and subsequent gene silencing by inducing spreading of PRC2 and H3K27me3 into H3K36me3 loci. According to another report, PHF1 recruits the PRC2 complex at double-strand breaks (DSBs) and inhibits the activity of PRC2. Regulates p53/TP53 stability and prolonges its turnover: may act by specifically binding to a methylated from of p53/TP53. The polypeptide is PHD finger protein 1 (PHF1) (Homo sapiens (Human)).